Consider the following 150-residue polypeptide: Troponin C, isoform 2B (150 aa).

Methionine 1 is modified (N-acetylmethionine). EF-hand domains follow at residues 7 to 42 (EQLS…MGVK), 43 to 78 (ISEK…FLIE), 83 to 118 (ALKA…LDNR), and 119 to 150 (LTEE…MMNG). The Ca(2+) site is built by aspartate 56, aspartate 58, serine 60, glutamate 62, and glutamate 67. Positions 132, 134, 136, 138, and 143 each coordinate Ca(2+).

This sequence belongs to the troponin C family.

Troponin is the central regulatory protein of striated muscle contraction. Tn consists of three components: Tn-I which is the inhibitor of actomyosin ATPase, Tn-T which contains the binding site for tropomyosin and Tn-C. The binding of calcium to Tn-C abolishes the inhibitory action of Tn on actin filaments. The polypeptide is Troponin C, isoform 2B (Homarus americanus (American lobster)).